The chain runs to 569 residues: MSKGVKSKTRSESKPKAHKKQSDTNGTKRKRENEEEISSDEEEADNEKLVSELDQNFDDVAELLDGDVADFKEEKKQKKNKEPKTVSENALQPYAQADESTSGSDKFEDLGLSEPTMRAIKDMGFEKMTKVQEKTIPPLLAGRDVLGAAKTGSGKTLAFLIPAIEMLYSLKFKPRNGTGVIVVSPTRELALQIFGVARDLMAHHSQTLGIVIGGANRRQEADKLMKGVNLLIATPGRLLDHLQNTKGFIFKNLKALVIDEADRILEIGFEDEMKQIIKVLPSDERQSMLFSATQTTKVEDLARISLRAGPLYINVVPETEVSTADGLEQGYVTCDSDMRFLLLFSFLRRNIKKKIIVFLSSCNCVKYFGELLNYIDLPVLDLHGKQKQQKRTNTFFEFCNAKQGILICTDVAARGLDIPAVDWIIQFDPPDDPRDYIHRVGRTARGTGGKGKSLMFLTPSELGFLRYLKAANVPLNEYEFPTNKIANIQSQLTKLIKGNYWLHQSAKDGYRAYLQAYASHHLKTVYQIDKLDLVKVAKSFGFDVPPKVNISIGASGKSIEKKHKKQRRQ.

Disordered regions lie at residues 1–57 (MSKG…DQNF) and 71–110 (FKEEKKQKKNKEPKTVSENALQPYAQADESTSGSDKFEDL). Acidic residues predominate over residues 34-45 (EEEISSDEEEAD). The span at 71–85 (FKEEKKQKKNKEPKT) shows a compositional bias: basic and acidic residues. Residues 105 to 133 (DKFEDLGLSEPTMRAIKDMGFEKMTKVQE) carry the Q motif motif. Residues 136–312 (IPPLLAGRDV…RISLRAGPLY (177 aa)) enclose the Helicase ATP-binding domain. 149-156 (AKTGSGKT) provides a ligand contact to ATP. The DEAD box motif lies at 259–262 (DEAD). The Helicase C-terminal domain maps to 326 to 496 (GLEQGYVTCD…NIQSQLTKLI (171 aa)).

This sequence belongs to the DEAD box helicase family. DDX18/HAS1 subfamily. Associates in the nucleolus with the 60S and pre-60S ribosomal subunits.

It localises to the nucleus. Its subcellular location is the nucleolus. It carries out the reaction ATP + H2O = ADP + phosphate + H(+). Its function is as follows. ATP-dependent RNA helicase involved in 40S ribosomal subunit biogenesis. Required for the processing and cleavage of 35S pre-rRNA at sites A0, A1, and A2, leading to mature 18S rRNA. This is ATP-dependent RNA helicase HAS1 (HAS1) from Meyerozyma guilliermondii (strain ATCC 6260 / CBS 566 / DSM 6381 / JCM 1539 / NBRC 10279 / NRRL Y-324) (Yeast).